Here is an 89-residue protein sequence, read N- to C-terminus: Small ribosomal subunit protein uS19 (89 aa).

Belongs to the universal ribosomal protein uS19 family.

Functionally, protein S19 forms a complex with S13 that binds strongly to the 16S ribosomal RNA. This is Small ribosomal subunit protein uS19 from Brachyspira hyodysenteriae (strain ATCC 49526 / WA1).